An 89-amino-acid polypeptide reads, in one-letter code: Arminin 375 (89 aa).

The signal sequence occupies residues 1 to 18 (MKAVFAILFLAFIALTYA). The propeptide occupies 19–57 (KSYDEVKEEIKNEVEREIFEDLEEESDELDNYVEESNDA). A86 bears the Alanine amide mark.

This sequence belongs to the arminin family. In terms of tissue distribution, expressed in entodermal epithelium along the body column.

The protein resides in the secreted. It localises to the target cell membrane. Functionally, antimicrobial peptide with a broad-spectrum antimicrobial activity. Keeps its antibacterial activity under a wide range of salt concentrations that mimic physiological conditions of human blood, which is surprising, since Hydra is an obligate freshwater animal with nearly no salt tolerance. Does not affect red blood cells. This is Arminin 375 from Hydra oligactis (Brown hydra).